An 845-amino-acid chain; its full sequence is Cadherin-related family member 5 (845 aa).

The signal sequence occupies residues 1–25; sequence MGSWALLWPPLLFTGLLVRPPGTMA. Residues 26 to 669 are Extracellular-facing; that stretch reads QAQYCSVNKD…DKRFSVVDMA (644 aa). N-linked (GlcNAc...) asparagine glycans are attached at residues N44, N81, N140, N198, N297, N308, and N405. Cadherin domains follow at residues 71–124, 125–237, 249–354, and 355–459; these read FRIQ…APEF, PFKT…PPWF, IQAQ…PPRF, and PQRL…PPST. The tract at residues 452–661 is disordered; the sequence is SEQEPPSTDV…SSGGGPSEDK (210 aa). Residues 506 to 518 are compositionally biased toward low complexity; that stretch reads SGTTLRPPTSSTP. An N-linked (GlcNAc...) asparagine glycan is attached at N526. Composition is skewed to polar residues over residues 539–549, 556–594, and 602–611; these read TAQTPKPGTSQ, GTST…SHQP, and AQTPEAGTSQ. 3 tandem repeats follow at residues 540–570, 571–601, and 602–631. Residues 540 to 645 form a 4 X 31 AA approximate tandem repeats region; the sequence is AQTPKPGTSQ…PEPGTSQPMP (106 aa). The stretch at 632–645 is one 4; truncated repeat; the sequence is TAQTPEPGTSQPMP. Residues 633–652 show a composition bias toward low complexity; the sequence is AQTPEPGTSQPMPLSKSTPS. Residues 670-690 traverse the membrane as a helical segment; the sequence is ALGGVLGALLLLALLGLAVLV. At 691-845 the chain is on the cytoplasmic side; sequence HKHYGPRLKC…DAPGGDDSYI (155 aa). The segment at 691–845 is mediates interaction with USH1C and MYO7B and is required for proper localization to microvilli tips and function in microvilli organization; sequence HKHYGPRLKC…DAPGGDDSYI (155 aa). The disordered stretch occupies residues 724-789; sequence ANWAPVPSPT…KERRPEGGYK (66 aa). Residues 729 to 762 are compositionally biased toward pro residues; that stretch reads VPSPTHDPKPAEAPMPAEPAPPGPASPGGAPEPP. S770 is modified (phosphoserine). T810 carries the phosphothreonine modification. The disordered stretch occupies residues 811–845; it reads LDVDGASDSGSGDEGEGAGRGGGPYDAPGGDDSYI. Phosphoserine occurs at positions 817, 819, and 821. Low complexity predominate over residues 835 to 845; it reads YDAPGGDDSYI.

In terms of assembly, part of the IMAC/intermicrovillar adhesion complex/intermicrovillar tip-link complex composed of ANKS4B, MYO7B, USH1C, CDHR2 and CDHR5. Interacts (via cytoplasmic domain) with USH1C and MYO7B; required for proper localization of CDHR5 to microvilli tips and its function in brush border differentiation. N- and O-glycosylated. In terms of tissue distribution, highest expression in kidney, liver, colon and small intestine. In kidney, expressed apically along brush border of proximal convoluted tubule but not in cortical collecting ducts. Isoform 1 is expressed primarily in adult small intestine and colon. Isoform 2 is highly expressed in fetal liver. Expressed in duodenum with higher expression in enterocytes along the villus axis and lower expression in crypts (at protein level).

The protein resides in the apical cell membrane. The protein localises to the cell projection. It localises to the microvillus membrane. Intermicrovillar adhesion molecule that forms, via its extracellular domain, calcium-dependent heterophilic complexes with CDHR2 on adjacent microvilli. Thereby, controls the packing of microvilli at the apical membrane of epithelial cells. Through its cytoplasmic domain, interacts with microvillus cytoplasmic proteins to form the intermicrovillar adhesion complex/IMAC. This complex plays a central role in microvilli and epithelial brush border differentiation. The chain is Cadherin-related family member 5 from Homo sapiens (Human).